The chain runs to 263 residues: Outer membrane protein OmpK (263 aa).

An N-terminal signal peptide occupies residues 1–20; that stretch reads MRKSLLALSLLAATSAPVLA.

It belongs to the nucleoside-specific channel-forming outer membrane porin (Tsx) (TC 1.B.10) family.

It is found in the cell outer membrane. Functionally, serves as receptor for a broad-host-range vibriophage, KVP40. This is Outer membrane protein OmpK from Vibrio parahaemolyticus.